The following is an 82-amino-acid chain: uncharacterized protein (82 aa).

3 helical membrane passes run 4–26 (LDIA…TCIC), 31–48 (LMPM…FTIF), and 52–74 (FLGW…LIVV).

It localises to the cell membrane. This is an uncharacterized protein from Bacillus subtilis (strain 168).